Consider the following 150-residue polypeptide: Large ribosomal subunit protein uL13 (150 aa).

Residues 129-150 (PEHPHSAQRPQTLQLNPAASSQ) are disordered. Positions 136–150 (QRPQTLQLNPAASSQ) are enriched in polar residues.

It belongs to the universal ribosomal protein uL13 family. Part of the 50S ribosomal subunit.

Its function is as follows. This protein is one of the early assembly proteins of the 50S ribosomal subunit, although it is not seen to bind rRNA by itself. It is important during the early stages of 50S assembly. The sequence is that of Large ribosomal subunit protein uL13 from Prochlorococcus marinus (strain MIT 9303).